The sequence spans 175 residues: RNA pyrophosphohydrolase (175 aa).

The Nudix hydrolase domain maps to 6–150 (GFRPNVGIVI…KREVYRRVMK (145 aa)). Residues 38–59 (GGVDDGETPEQAMYRELYEEIG) carry the Nudix box motif.

This sequence belongs to the Nudix hydrolase family. RppH subfamily. The cofactor is a divalent metal cation.

Its function is as follows. Accelerates the degradation of transcripts by removing pyrophosphate from the 5'-end of triphosphorylated RNA, leading to a more labile monophosphorylated state that can stimulate subsequent ribonuclease cleavage. The sequence is that of RNA pyrophosphohydrolase from Aeromonas hydrophila subsp. hydrophila (strain ATCC 7966 / DSM 30187 / BCRC 13018 / CCUG 14551 / JCM 1027 / KCTC 2358 / NCIMB 9240 / NCTC 8049).